Here is a 622-residue protein sequence, read N- to C-terminus: Procollagen galactosyltransferase 1 (622 aa).

Positions 1–29 (MAAAPRAGRRRGQPLLALLLLLLAPLPPG) are cleaved as a signal peptide. N-linked (GlcNAc...) asparagine glycans are attached at residues Asn96, Asn184, and Asn381. The segment covering 588-606 (RAKSQKMREQQALSREAKN) has biased composition (basic and acidic residues). A disordered region spans residues 588-622 (RAKSQKMREQQALSREAKNSDVLQSPLDSAARDEL). Positions 619–622 (RDEL) match the Endoplasmic reticulum retention motif motif.

It belongs to the glycosyltransferase 25 family. In terms of processing, N-glycosylated. Ubiquitous with higher levels in placenta, heart, lung and spleen.

The protein localises to the endoplasmic reticulum lumen. The catalysed reaction is (5R)-5-hydroxy-L-lysyl-[collagen] + UDP-alpha-D-galactose = (5R)-5-O-(beta-D-galactosyl)-5-hydroxy-L-lysyl-[collagen] + UDP + H(+). Beta-galactosyltransferase that transfers beta-galactose to hydroxylysine residues of type I collagen. By acting on collagen glycosylation, facilitates the formation of collagen triple helix. Also involved in the biosynthesis of collagen type IV. The protein is Procollagen galactosyltransferase 1 (COLGALT1) of Homo sapiens (Human).